The primary structure comprises 456 residues: MTKKALSAVILAAGKGTRMYSDLPKVLHTIAGKPMVKHVIDTAHQLGAENIHLIYGHGGDLMRSHLANEQVNWVLQTEQLGTAHAVQQSAPFFKDNENIVVLYGDAPLITKETLEKLIEAKPENGIALLTVNLDNPTGYGRIIRENGNVVAIVEQKDANADQLNIKEVNTGVMVSDGASFKKWLARVGNNNAQGEYYLTDLIALANQDNCQVVAVQATDVMEVEGANNRLQLAALERYLQNKQASKLLLEGVMIYDPARFDLRGTLEHGKDVEIDVNVIIEGNVKLGDRVKIGAGCVLKNVVIGNDVEIKPYSVLEDSVVGEKAAIGPFSRLRPGAELAAETHVGNFVEIKKSTVGKGSKVNHLTYVGDSEIGSNCNIGAGVITCNYDGANKFKTIIGDDVFVGSDTQLVAPVKVANGATIGAGTTITRDVGENELVITRVAQRHIQGWQRPIKKK.

Residues 1–229 (MTKKALSAVI…VMEVEGANNR (229 aa)) are pyrophosphorylase. Residues 11–14 (LAAG), Lys25, Gln76, 81–82 (GT), 103–105 (YGD), Gly140, Glu154, Asn169, and Asn227 each bind UDP-N-acetyl-alpha-D-glucosamine. Asp105 lines the Mg(2+) pocket. Residue Asn227 coordinates Mg(2+). Residues 230 to 250 (LQLAALERYLQNKQASKLLLE) are linker. An N-acetyltransferase region spans residues 251–456 (GVMIYDPARF…QGWQRPIKKK (206 aa)). 2 residues coordinate UDP-N-acetyl-alpha-D-glucosamine: Arg333 and Lys351. The active-site Proton acceptor is the His363. Residues Tyr366 and Asn377 each coordinate UDP-N-acetyl-alpha-D-glucosamine. Acetyl-CoA is bound by residues Ala380, 386–387 (NY), Ser405, Ala423, and Arg440.

The protein in the N-terminal section; belongs to the N-acetylglucosamine-1-phosphate uridyltransferase family. It in the C-terminal section; belongs to the transferase hexapeptide repeat family. Homotrimer. The cofactor is Mg(2+).

It is found in the cytoplasm. The catalysed reaction is alpha-D-glucosamine 1-phosphate + acetyl-CoA = N-acetyl-alpha-D-glucosamine 1-phosphate + CoA + H(+). It carries out the reaction N-acetyl-alpha-D-glucosamine 1-phosphate + UTP + H(+) = UDP-N-acetyl-alpha-D-glucosamine + diphosphate. It functions in the pathway nucleotide-sugar biosynthesis; UDP-N-acetyl-alpha-D-glucosamine biosynthesis; N-acetyl-alpha-D-glucosamine 1-phosphate from alpha-D-glucosamine 6-phosphate (route II): step 2/2. The protein operates within nucleotide-sugar biosynthesis; UDP-N-acetyl-alpha-D-glucosamine biosynthesis; UDP-N-acetyl-alpha-D-glucosamine from N-acetyl-alpha-D-glucosamine 1-phosphate: step 1/1. Its pathway is bacterial outer membrane biogenesis; LPS lipid A biosynthesis. Functionally, catalyzes the last two sequential reactions in the de novo biosynthetic pathway for UDP-N-acetylglucosamine (UDP-GlcNAc). The C-terminal domain catalyzes the transfer of acetyl group from acetyl coenzyme A to glucosamine-1-phosphate (GlcN-1-P) to produce N-acetylglucosamine-1-phosphate (GlcNAc-1-P), which is converted into UDP-GlcNAc by the transfer of uridine 5-monophosphate (from uridine 5-triphosphate), a reaction catalyzed by the N-terminal domain. The sequence is that of Bifunctional protein GlmU from Haemophilus influenzae (strain PittGG).